The chain runs to 363 residues: Cytoplasmic tRNA 2-thiolation protein 1 (363 aa).

The interval 337–363 (DGDCEQQATRSERNRSSLQGKHGNFDF) is disordered.

Belongs to the TtcA family. CTU1/NCS6/ATPBD3 subfamily.

The protein resides in the cytoplasm. It functions in the pathway tRNA modification; 5-methoxycarbonylmethyl-2-thiouridine-tRNA biosynthesis. Plays a central role in 2-thiolation of mcm(5)S(2)U at tRNA wobble positions of tRNA(Lys), tRNA(Glu) and tRNA(Gln). Directly binds tRNAs and probably acts by catalyzing adenylation of tRNAs, an intermediate required for 2-thiolation. It is unclear whether it acts as a sulfurtransferase that transfers sulfur from thiocarboxylated URM1 onto the uridine of tRNAs at wobble position. The polypeptide is Cytoplasmic tRNA 2-thiolation protein 1 (Oryza sativa subsp. japonica (Rice)).